The chain runs to 698 residues: Elongation factor G (698 aa).

Positions 8 to 284 (ANVRNIGIMA…AVVDYLPSPL (277 aa)) constitute a tr-type G domain. GTP contacts are provided by residues 17–24 (AHIDAGKT), 81–85 (DTPGH), and 135–138 (NKLD).

It belongs to the TRAFAC class translation factor GTPase superfamily. Classic translation factor GTPase family. EF-G/EF-2 subfamily.

It is found in the cytoplasm. Its function is as follows. Catalyzes the GTP-dependent ribosomal translocation step during translation elongation. During this step, the ribosome changes from the pre-translocational (PRE) to the post-translocational (POST) state as the newly formed A-site-bound peptidyl-tRNA and P-site-bound deacylated tRNA move to the P and E sites, respectively. Catalyzes the coordinated movement of the two tRNA molecules, the mRNA and conformational changes in the ribosome. This Salinispora tropica (strain ATCC BAA-916 / DSM 44818 / JCM 13857 / NBRC 105044 / CNB-440) protein is Elongation factor G.